A 518-amino-acid polypeptide reads, in one-letter code: Bifunctional purine biosynthesis protein PurH (518 aa).

The MGS-like domain maps to 1–146; the sequence is MARIALISVS…KNHESVSILT (146 aa).

Belongs to the PurH family.

It catalyses the reaction (6R)-10-formyltetrahydrofolate + 5-amino-1-(5-phospho-beta-D-ribosyl)imidazole-4-carboxamide = 5-formamido-1-(5-phospho-D-ribosyl)imidazole-4-carboxamide + (6S)-5,6,7,8-tetrahydrofolate. The catalysed reaction is IMP + H2O = 5-formamido-1-(5-phospho-D-ribosyl)imidazole-4-carboxamide. Its pathway is purine metabolism; IMP biosynthesis via de novo pathway; 5-formamido-1-(5-phospho-D-ribosyl)imidazole-4-carboxamide from 5-amino-1-(5-phospho-D-ribosyl)imidazole-4-carboxamide (10-formyl THF route): step 1/1. The protein operates within purine metabolism; IMP biosynthesis via de novo pathway; IMP from 5-formamido-1-(5-phospho-D-ribosyl)imidazole-4-carboxamide: step 1/1. In Prochlorococcus marinus (strain MIT 9211), this protein is Bifunctional purine biosynthesis protein PurH.